Consider the following 72-residue polypeptide: Small proline-rich protein 2A (72 aa).

Residues methionine 1–proline 11 are compositionally biased toward low complexity. The interval methionine 1–threonine 20 is disordered. 3 tandem repeats follow at residues proline 21 to proline 29, proline 30 to proline 38, and proline 39 to proline 47. The segment at proline 21–proline 47 is 3 X 9 AA tandem repeats of P-K-C-P-[EQ]-P-C-P-P. The tract at residues proline 42–lysine 72 is disordered.

This sequence belongs to the cornifin (SPRR) family. Forms five pairs of intrachain disulfide bonds. In terms of tissue distribution, expressed in intestine; selectively expressed in goblet cells.

It is found in the secreted. It localises to the extracellular space. Its subcellular location is the cytoplasmic vesicle. The protein localises to the secretory vesicle. Its function is as follows. Gut bactericidal protein that selectively kills Gram-positive bacteria by binding to negatively charged lipids on bacterial membranes, leading to bacterial membrane permeabilization and disruption. Specifically binds lipids bearing negatively charged headgroups, such as phosphatidic acid, phosphatidylserine (PS), cardiolipin (CL), and phosphatidylinositol phosphates, but not to zwitterionic or neutral lipids. Induced by type-2 cytokines in response to helminth infection and is required to protect against helminth-induced bacterial invasion of intestinal tissue. May also be involved in the development of the cornified envelope of squamous epithelia; however, additional evidences are required to confirm this result in vivo. The chain is Small proline-rich protein 2A from Homo sapiens (Human).